A 199-amino-acid chain; its full sequence is Small ribosomal subunit protein uS4 (199 aa).

Positions 106–170 constitute an S4 RNA-binding domain; the sequence is RRLQTIVFRK…SPVANELHPI (65 aa). The segment at 177–199 is disordered; that stretch reads PAQRSAEMKEGQGEASEEGETDE.

The protein belongs to the universal ribosomal protein uS4 family. Part of the 30S ribosomal subunit. Contacts protein S5. The interaction surface between S4 and S5 is involved in control of translational fidelity.

Its function is as follows. One of the primary rRNA binding proteins, it binds directly to 16S rRNA where it nucleates assembly of the body of the 30S subunit. In terms of biological role, with S5 and S12 plays an important role in translational accuracy. The polypeptide is Small ribosomal subunit protein uS4 (Thermoplasma acidophilum (strain ATCC 25905 / DSM 1728 / JCM 9062 / NBRC 15155 / AMRC-C165)).